Consider the following 426-residue polypeptide: Molybdopterin molybdenumtransferase 1 (426 aa).

This sequence belongs to the MoeA family. The cofactor is Mg(2+).

The enzyme catalyses adenylyl-molybdopterin + molybdate = Mo-molybdopterin + AMP + H(+). The protein operates within cofactor biosynthesis; molybdopterin biosynthesis. Catalyzes the insertion of molybdate into adenylated molybdopterin with the concomitant release of AMP. This is Molybdopterin molybdenumtransferase 1 (moeA1) from Mycobacterium tuberculosis (strain ATCC 25618 / H37Rv).